Here is a 471-residue protein sequence, read N- to C-terminus: Glutamate--tRNA ligase (471 aa).

The 'HIGH' region signature appears at 9-19 (PSPTGYLHVGG). Zn(2+) contacts are provided by C98, C100, C125, and H127. Residues 237 to 241 (KLSKR) carry the 'KMSKS' region motif. K240 contributes to the ATP binding site.

The protein belongs to the class-I aminoacyl-tRNA synthetase family. Glutamate--tRNA ligase type 1 subfamily. In terms of assembly, monomer. Zn(2+) serves as cofactor.

It localises to the cytoplasm. The catalysed reaction is tRNA(Glu) + L-glutamate + ATP = L-glutamyl-tRNA(Glu) + AMP + diphosphate. Catalyzes the attachment of glutamate to tRNA(Glu) in a two-step reaction: glutamate is first activated by ATP to form Glu-AMP and then transferred to the acceptor end of tRNA(Glu). The sequence is that of Glutamate--tRNA ligase from Shigella sonnei (strain Ss046).